The primary structure comprises 360 residues: Phospho-N-acetylmuramoyl-pentapeptide-transferase (360 aa).

The Periplasmic segment spans residues 1–25 (MLVWLAEHLVKYYSGFNVFSYLTFR). A helical transmembrane segment spans residues 26 to 46 (AIVSLLTALFISLWMGPRMIA). Residues 47–71 (HLQKLSFGQVVRNDGPESHFSKRGT) are Cytoplasmic-facing. Residues 72–92 (PTMGGIMILTAIVISVLLWAY) traverse the membrane as a helical segment. Position 93 (Pro-93) is a topological domain, periplasmic. A helical membrane pass occupies residues 94 to 114 (SNPYVWCVLVVLVGYGVIGFV). Residues 115 to 131 (DDYRKVVRKDTKGLIAR) lie on the Cytoplasmic side of the membrane. A helical transmembrane segment spans residues 132-152 (WKYFWMSVIALGVAFALYLAG). At 153 to 167 (KDTPATQLVVPFFKD) the chain is on the periplasmic side. Residues 168 to 188 (VMPQLGLFYILLAYFVIVGTG) traverse the membrane as a helical segment. Over 189–198 (NAVNLTDGLD) the chain is Cytoplasmic. A helical membrane pass occupies residues 199–219 (GLAIMPTVFVAGGFALVAWAT). The Periplasmic portion of the chain corresponds to 220 to 235 (GNMNFASYLHIPYLRH). A helical membrane pass occupies residues 236 to 256 (AGELVIVCTAIVGAGLGFLWF). The Cytoplasmic segment spans residues 257 to 262 (NTYPAQ). Residues 263–283 (VFMGDVGSLALGGALGIIAVL) traverse the membrane as a helical segment. Over 284-287 (LRQE) the chain is Periplasmic. The helical transmembrane segment at 288–308 (FLLVIMGGVFVVETLSVILQV) threads the bilayer. The Cytoplasmic segment spans residues 309–337 (GSFKLRGQRIFRMAPIHHHYELKGWPEPR). The chain crosses the membrane as a helical span at residues 338–358 (VIVRFWIISLMLVLIGLATLK). Residues 359-360 (VR) are Periplasmic-facing.

The protein belongs to the glycosyltransferase 4 family. MraY subfamily. It depends on Mg(2+) as a cofactor.

It localises to the cell inner membrane. It catalyses the reaction UDP-N-acetyl-alpha-D-muramoyl-L-alanyl-gamma-D-glutamyl-meso-2,6-diaminopimeloyl-D-alanyl-D-alanine + di-trans,octa-cis-undecaprenyl phosphate = di-trans,octa-cis-undecaprenyl diphospho-N-acetyl-alpha-D-muramoyl-L-alanyl-D-glutamyl-meso-2,6-diaminopimeloyl-D-alanyl-D-alanine + UMP. The protein operates within cell wall biogenesis; peptidoglycan biosynthesis. Its function is as follows. Catalyzes the initial step of the lipid cycle reactions in the biosynthesis of the cell wall peptidoglycan: transfers peptidoglycan precursor phospho-MurNAc-pentapeptide from UDP-MurNAc-pentapeptide onto the lipid carrier undecaprenyl phosphate, yielding undecaprenyl-pyrophosphoryl-MurNAc-pentapeptide, known as lipid I. This is Phospho-N-acetylmuramoyl-pentapeptide-transferase from Shigella boydii serotype 18 (strain CDC 3083-94 / BS512).